A 261-amino-acid polypeptide reads, in one-letter code: Short chain dehydrogenase/reductase astE (261 aa).

NADP(+) is bound by residues I24, D70, N97, and K131. Residues S150 and Y164 each act as proton donor in the active site. Residues Y164, K168, V197, and T199 each coordinate NADP(+). The active-site Lowers pKa of active site Tyr is the K168.

Belongs to the short-chain dehydrogenases/reductases (SDR) family.

It participates in secondary metabolite biosynthesis; terpenoid biosynthesis. In terms of biological role, short chain dehydrogenase/reductase; part of the gene cluster that mediates the biosynthesis of astellolides, drimane-type sesquiterpene esters that show antimicrobial, anti-inflammatory, and anti-tumor activities. The first step in astellolide biosynthesis is performed by the sesquiterpene cyclase astC that catalyzes the formation of drimanyl pyrophosphate from farnesyl pyrophosphate. Drimanyl pyrophosphate is then dephosphorylated by the sesquiterpene phosphatase astI to produce drimanyl monophosphate which is further dephosphorylated to drim-8-ene-11-ol by atsK. Drim-8-ene-11-ol is converted to confertifolin, probably by the cytochrome P450 monooxygenase astD and/or the dehydrogenase astE. The cytochrome P450 monooxygenases astB, astF and astJ then hydroxylate confertifolin at C6, C14, or C15 to form trihydroxy confertifolin. The nonribosomal peptide synthetase astA catalyzes ester bond formation between trihydroxy contifolin and benzoic acid (BA) or 4-hydroxy benzoic acid (4HBA), leading to the formation of dideacetyl astellolides A and B, respectively. Finally, the O-acetyltransferase astG converts dideacetyl astellolides A and B into deacetyl astellolides A and B. The chain is Short chain dehydrogenase/reductase astE from Aspergillus oryzae (strain ATCC 42149 / RIB 40) (Yellow koji mold).